We begin with the raw amino-acid sequence, 699 residues long: Elongation factor G (699 aa).

The tr-type G domain occupies 10–292 (NRTRNIGIMA…AVIDYLPSPT (283 aa)). GTP contacts are provided by residues 19–26 (AHIDAGKT), 90–94 (DTPGH), and 144–147 (NKMD). The segment at 292-312 (TDVPAIRGEEDDGSEGSRSAS) is disordered.

Belongs to the TRAFAC class translation factor GTPase superfamily. Classic translation factor GTPase family. EF-G/EF-2 subfamily.

Its subcellular location is the cytoplasm. In terms of biological role, catalyzes the GTP-dependent ribosomal translocation step during translation elongation. During this step, the ribosome changes from the pre-translocational (PRE) to the post-translocational (POST) state as the newly formed A-site-bound peptidyl-tRNA and P-site-bound deacylated tRNA move to the P and E sites, respectively. Catalyzes the coordinated movement of the two tRNA molecules, the mRNA and conformational changes in the ribosome. The polypeptide is Elongation factor G (Coxiella burnetii (strain RSA 331 / Henzerling II)).